A 212-amino-acid polypeptide reads, in one-letter code: dITP/XTP pyrophosphatase (212 aa).

7–12 (SNNAKK) lines the substrate pocket. Residues Glu39 and Asp68 each contribute to the Mg(2+) site. The Proton acceptor role is filled by Asp68. Residues Ser69, 165-168 (FGYD), Lys188, and 193-194 (HR) contribute to the substrate site.

This sequence belongs to the HAM1 NTPase family. Homodimer. Mg(2+) serves as cofactor.

The enzyme catalyses XTP + H2O = XMP + diphosphate + H(+). It catalyses the reaction dITP + H2O = dIMP + diphosphate + H(+). The catalysed reaction is ITP + H2O = IMP + diphosphate + H(+). Pyrophosphatase that catalyzes the hydrolysis of nucleoside triphosphates to their monophosphate derivatives, with a high preference for the non-canonical purine nucleotides XTP (xanthosine triphosphate), dITP (deoxyinosine triphosphate) and ITP. Seems to function as a house-cleaning enzyme that removes non-canonical purine nucleotides from the nucleotide pool, thus preventing their incorporation into DNA/RNA and avoiding chromosomal lesions. The sequence is that of dITP/XTP pyrophosphatase from Leptothrix cholodnii (strain ATCC 51168 / LMG 8142 / SP-6) (Leptothrix discophora (strain SP-6)).